The primary structure comprises 189 residues: Glucose-6-phosphate isomerase (189 aa).

Fe cation-binding residues include histidine 88, histidine 90, glutamate 97, and histidine 136.

The protein belongs to the archaeal-type GPI family. In terms of assembly, homodimer.

It localises to the cytoplasm. It catalyses the reaction alpha-D-glucose 6-phosphate = beta-D-fructose 6-phosphate. It participates in carbohydrate degradation; glycolysis; D-glyceraldehyde 3-phosphate and glycerone phosphate from D-glucose: step 2/4. This chain is Glucose-6-phosphate isomerase, found in Thermococcus gammatolerans (strain DSM 15229 / JCM 11827 / EJ3).